A 336-amino-acid polypeptide reads, in one-letter code: Tryptophan--tRNA ligase (336 aa).

ATP-binding positions include 16-18 and 24-25; these read QPT and GN. A 'HIGH' region motif is present at residues 17–25; the sequence is PTGQLHLGN. Asp140 is a binding site for L-tryptophan. Residues 152–154, Val191, and 200–204 each bind ATP; these read GED and KMSKS. Residues 200–204 carry the 'KMSKS' region motif; that stretch reads KMSKS.

It belongs to the class-I aminoacyl-tRNA synthetase family. Homodimer.

The protein resides in the cytoplasm. The catalysed reaction is tRNA(Trp) + L-tryptophan + ATP = L-tryptophyl-tRNA(Trp) + AMP + diphosphate + H(+). Its function is as follows. Catalyzes the attachment of tryptophan to tRNA(Trp). This chain is Tryptophan--tRNA ligase, found in Gloeobacter violaceus (strain ATCC 29082 / PCC 7421).